A 508-amino-acid polypeptide reads, in one-letter code: Tryptamine 4-monooxygenase (508 aa).

The signal sequence occupies residues 1–19 (MIAVLFSFVIAGCIYYIVS). Cys439 is a binding site for heme.

It belongs to the cytochrome P450 family. The cofactor is heme.

It catalyses the reaction tryptamine + AH2 + O2 = 4-hydroxytryptamine + A + H2O. It functions in the pathway secondary metabolite biosynthesis. In terms of biological role, cytochrome P450 monooxygenase; part of the gene cluster that mediates the biosynthesis of psilocybin, a psychotropic tryptamine-derived natural product. The first step in the pathway is the decarboxylation of L-tryptophan to tryptamine by the decarboxylase psiD. 4-hydroxy-L-tryptophan is accepted as substrate by psiD as well. The cytochrome P450 monooxygenase psiH then converts tryptamine to 4-hydroxytryptamine. The kinase psiK catalyzes the 4-O-phosphorylation step by converting 4-hydroxytryptamine into norbaeocystin. The methyltransferase psiM then catalyzes iterative methyl transfer to the amino group of norbaeocystin to yield psilocybin via a monomethylated intermediate, baeocystin. This Psilocybe cubensis (Psychedelic mushroom) protein is Tryptamine 4-monooxygenase.